Here is a 287-residue protein sequence, read N- to C-terminus: NAD-dependent protein deacylase sir-2.2 (287 aa).

Positions 10 to 287 (AELCENSLKK…YKISDVLKEM (278 aa)) constitute a Deacetylase sirtuin-type domain. NAD(+) contacts are provided by residues 35 to 55 (GAGISTESGIPDYRSKDVGLY) and 116 to 119 (QNVD). Histidine 134 serves as the catalytic Proton acceptor. Cysteine 142, cysteine 145, cysteine 196, and cysteine 199 together coordinate Zn(2+). Residues 236–238 (GTS), 262–264 (NIG), and isoleucine 280 each bind NAD(+).

This sequence belongs to the sirtuin family. Class II subfamily. Interacts with pyc-1, pcca-1 and mccc-1. Zn(2+) is required as a cofactor. In terms of tissue distribution, ubiquitously expressed with high expression in the pharynx, body wall muscles and gonad.

It localises to the mitochondrion matrix. The protein localises to the mitochondrion. The catalysed reaction is N(6)-acetyl-L-lysyl-[protein] + NAD(+) + H2O = 2''-O-acetyl-ADP-D-ribose + nicotinamide + L-lysyl-[protein]. In terms of biological role, NAD-dependent protein deacylase. Catalyzes the NAD-dependent hydrolysis of acyl groups from lysine residues. Plays a role in oxidative stress resistance. The chain is NAD-dependent protein deacylase sir-2.2 (sir-2.2) from Caenorhabditis elegans.